The following is a 307-amino-acid chain: Aspartate carbamoyltransferase catalytic subunit (307 aa).

2 residues coordinate carbamoyl phosphate: arginine 59 and threonine 60. Lysine 87 is an L-aspartate binding site. Carbamoyl phosphate contacts are provided by arginine 109, histidine 137, and glutamine 140. 2 residues coordinate L-aspartate: arginine 170 and arginine 224. The carbamoyl phosphate site is built by glycine 265 and proline 266.

It belongs to the aspartate/ornithine carbamoyltransferase superfamily. ATCase family. Heterododecamer (2C3:3R2) of six catalytic PyrB chains organized as two trimers (C3), and six regulatory PyrI chains organized as three dimers (R2).

It catalyses the reaction carbamoyl phosphate + L-aspartate = N-carbamoyl-L-aspartate + phosphate + H(+). Its pathway is pyrimidine metabolism; UMP biosynthesis via de novo pathway; (S)-dihydroorotate from bicarbonate: step 2/3. Functionally, catalyzes the condensation of carbamoyl phosphate and aspartate to form carbamoyl aspartate and inorganic phosphate, the committed step in the de novo pyrimidine nucleotide biosynthesis pathway. This Cytophaga hutchinsonii (strain ATCC 33406 / DSM 1761 / CIP 103989 / NBRC 15051 / NCIMB 9469 / D465) protein is Aspartate carbamoyltransferase catalytic subunit.